Reading from the N-terminus, the 416-residue chain is Queuine tRNA-ribosyltransferase accessory subunit 2 (416 aa).

Positions 323, 325, 328, and 354 each coordinate Zn(2+).

The protein belongs to the queuine tRNA-ribosyltransferase family. QTRT2 subfamily. Heterodimer of a catalytic subunit and an accessory subunit. It depends on Zn(2+) as a cofactor.

It localises to the cytoplasm. Functionally, non-catalytic subunit of the queuine tRNA-ribosyltransferase (TGT) that catalyzes the base-exchange of a guanine (G) residue with queuine (Q) at position 34 (anticodon wobble position) in tRNAs with GU(N) anticodons (tRNA-Asp, -Asn, -His and -Tyr), resulting in the hypermodified nucleoside queuosine (7-(((4,5-cis-dihydroxy-2-cyclopenten-1-yl)amino)methyl)-7-deazaguanosine). This is Queuine tRNA-ribosyltransferase accessory subunit 2 from Drosophila mojavensis (Fruit fly).